A 329-amino-acid polypeptide reads, in one-letter code: MNQTETSTAPANAETYDTNIYYTPSPRVTANDITTLTTFATPVPQALDYVNTQYNDIYRNQPATYYLPTYGQPGSSSFYPDFSNFNVARTQDFAALPTVAADIKPIIIKQEKEVSSGGSNNNDPTSTDLLGDGVAHSGDETAPIATLVAGANAPRRTKLDRRKAATMRERRRLRKVNEAFEVVKQRTCPNPNQRLPKVEILRSAIDYINTLERMLTSVGKTTKIMDQNHHLQMTQPISAAPHDYITSSHFANAGYNPDGPNVYDDEDLSDTDEDRDHHHHKLGNAIDLRRRNSLDGLARIVDNIPLLQSQPEVPNEIPAGSEDKKLEIL.

Positions 160 to 211 (DRRKAATMRERRRLRKVNEAFEVVKQRTCPNPNQRLPKVEILRSAIDYINTL) constitute a bHLH domain. Positions 256 to 279 (NPDGPNVYDDEDLSDTDEDRDHHH) are disordered. Residues 263 to 273 (YDDEDLSDTDE) show a composition bias toward acidic residues.

As to quaternary structure, efficient DNA binding requires dimerization with another bHLH protein. As to expression, body wall muscle cells; in clonal muscle precursors, in a set of early embryonic blastomeres (the ms-granddaughters), and in six glial-like cells called GLRS.

The protein localises to the nucleus. Functionally, accumulation defines the body wall muscle cell fate during embryogenesis. The sequence is that of Myoblast determination protein 1 homolog (hlh-1) from Caenorhabditis briggsae.